Reading from the N-terminus, the 174-residue chain is Photosystem II repair protein PSB27-H1, chloroplastic (174 aa).

Positions 1–35 are disordered; sequence MASASATATLLKPNLPPHKPTIIASSVSPPLPPPR. The residue at position 94 (Thr-94) is a Phosphothreonine. Phosphotyrosine is present on Tyr-132.

The protein belongs to the Psb27 family.

The protein resides in the plastid. It is found in the chloroplast thylakoid membrane. In terms of biological role, probably involved in repair of photodamaged photosystem II (PSII). This is Photosystem II repair protein PSB27-H1, chloroplastic (PSB27-1) from Arabidopsis thaliana (Mouse-ear cress).